The primary structure comprises 400 residues: Axin-like protein 1 (400 aa).

The RGS domain occupies 4-132 (RSKFSIDRVL…TTTADVNTTW (129 aa)). Disordered stretches follow at residues 190-233 (QETK…TLKV) and 278-306 (GTLE…GSEA). The span at 194 to 210 (NSSETEEHAESPRKEKS) shows a compositional bias: basic and acidic residues. Over residues 287 to 298 (FTGTNNGFSTLQ) the composition is skewed to polar residues. The region spanning 305-392 (EAPKMTVELR…RITAICRMCP (88 aa)) is the DIX domain.

Interacts with bar-1, dsh-2, gsk-3, and mig-5.

Functionally, works in parallel with pry-1 in negatively regulating bar-1 signaling in vulval precursor cells and Q neuroblasts. Shown to have a role in excretory cell development. The protein is Axin-like protein 1 of Caenorhabditis elegans.